A 200-amino-acid polypeptide reads, in one-letter code: DNA-directed RNA polymerase subunit 7-like protein (200 aa).

Belongs to the eukaryotic RPB7/RPC8 RNA polymerase subunit family.

The protein resides in the nucleus. The chain is DNA-directed RNA polymerase subunit 7-like protein (NRPB7L) from Arabidopsis thaliana (Mouse-ear cress).